The chain runs to 208 residues: Pyridoxine/pyridoxamine 5'-phosphate oxidase (208 aa).

FMN is bound by residues 55 to 60, 70 to 71, lysine 76, lysine 77, and glutamine 99; these read RMVLLK and YT. Residue lysine 60 participates in substrate binding. The substrate site is built by tyrosine 117, arginine 121, and serine 125. Residues 134 to 135 and tryptophan 179 contribute to the FMN site; that span reads QS. Residue 185 to 187 participates in substrate binding; it reads RLH. Arginine 189 contacts FMN.

The protein belongs to the pyridoxamine 5'-phosphate oxidase family. In terms of assembly, homodimer. FMN serves as cofactor.

The enzyme catalyses pyridoxamine 5'-phosphate + O2 + H2O = pyridoxal 5'-phosphate + H2O2 + NH4(+). The catalysed reaction is pyridoxine 5'-phosphate + O2 = pyridoxal 5'-phosphate + H2O2. It participates in cofactor metabolism; pyridoxal 5'-phosphate salvage; pyridoxal 5'-phosphate from pyridoxamine 5'-phosphate: step 1/1. Its pathway is cofactor metabolism; pyridoxal 5'-phosphate salvage; pyridoxal 5'-phosphate from pyridoxine 5'-phosphate: step 1/1. Functionally, catalyzes the oxidation of either pyridoxine 5'-phosphate (PNP) or pyridoxamine 5'-phosphate (PMP) into pyridoxal 5'-phosphate (PLP). In Brucella abortus biovar 1 (strain 9-941), this protein is Pyridoxine/pyridoxamine 5'-phosphate oxidase.